The chain runs to 718 residues: K(+)-insensitive pyrophosphate-energized proton pump (718 aa).

The next 6 membrane-spanning stretches (helical) occupy residues 6-26 (AVLV…IWAI), 61-81 (IAIV…LNAA), 83-103 (GFLI…HVSV), 112-132 (AASL…AITG), 133-153 (LLVA…LTVW), and 168-188 (VSLG…GGIF). Lys-190 lines the substrate pocket. Mg(2+)-binding residues include Asp-193, Asp-197, Asn-220, and Asp-223. The next 6 helical transmembrane spans lie at 235–255 (LFET…IFFH), 265–285 (LYPL…TFFV), 300–320 (GLIA…TLTV), 335–355 (GTNL…IVVI), 385–405 (GLAV…GGII), and 413–433 (LFGT…IVAL). Asp-441 lines the Mg(2+) pocket. 4 helical membrane passes run 472-492 (AVTK…LFAA), 524-544 (YVVA…GMAM), 593-613 (IIPS…VLLI), and 620-640 (AFAA…FVAI). Ca(2+) is bound by residues Asp-650, Asp-682, and Asp-686. Lys-689 is a substrate binding site. Residues 695 to 715 (AVNPAIKITNIVALLLLAVLA) form a helical membrane-spanning segment.

The protein belongs to the H(+)-translocating pyrophosphatase (TC 3.A.10) family. K(+)-insensitive subfamily. Homodimer. It depends on Mg(2+) as a cofactor.

The protein localises to the cell inner membrane. It carries out the reaction diphosphate + H2O + H(+)(in) = 2 phosphate + 2 H(+)(out). Its function is as follows. Proton pump that utilizes the energy of pyrophosphate hydrolysis as the driving force for proton movement across the membrane. Generates a proton motive force. This Brucella melitensis biotype 1 (strain ATCC 23456 / CCUG 17765 / NCTC 10094 / 16M) protein is K(+)-insensitive pyrophosphate-energized proton pump.